The sequence spans 259 residues: Tryptophan synthase alpha chain (259 aa).

Active-site proton acceptor residues include glutamate 52 and aspartate 63.

The protein belongs to the TrpA family. As to quaternary structure, tetramer of two alpha and two beta chains.

It catalyses the reaction (1S,2R)-1-C-(indol-3-yl)glycerol 3-phosphate + L-serine = D-glyceraldehyde 3-phosphate + L-tryptophan + H2O. It participates in amino-acid biosynthesis; L-tryptophan biosynthesis; L-tryptophan from chorismate: step 5/5. Its function is as follows. The alpha subunit is responsible for the aldol cleavage of indoleglycerol phosphate to indole and glyceraldehyde 3-phosphate. In Streptococcus sanguinis (strain SK36), this protein is Tryptophan synthase alpha chain.